Consider the following 224-residue polypeptide: MTLKTLPNESMPREKLLQRGPQALSDAELLAIFLRTGTQGMNVIELSDFLIQDFGSLRQLFSASEKEFCQHKGLGQAKYVQLQAVLEMTQRYLAETLKRGDALTSPEQTKLYLSSILRDRQREAFYILFLDNQHRVIKDEILFEGTLDAASVYPREVVKRALHHNAAALILAHNHPSGVAEPSQADRRITRRLIDALGLVDIRILDHFVIGDGESVSFAERGWI.

Residues 102-224 form the MPN domain; sequence ALTSPEQTKL…SVSFAERGWI (123 aa). Zn(2+) is bound by residues His-173, His-175, and Asp-186. Positions 173–186 match the JAMM motif motif; the sequence is HNHPSGVAEPSQAD.

The protein belongs to the UPF0758 family.

This is UPF0758 protein VIBHAR_00653 from Vibrio campbellii (strain ATCC BAA-1116).